The following is a 241-amino-acid chain: Probable transcriptional regulatory protein FMG_0893 (241 aa).

It belongs to the TACO1 family.

The protein localises to the cytoplasm. This is Probable transcriptional regulatory protein FMG_0893 from Finegoldia magna (strain ATCC 29328 / DSM 20472 / WAL 2508) (Peptostreptococcus magnus).